The following is a 283-amino-acid chain: Co-chaperone protein DjlA (283 aa).

Residues 1–6 (MQIFGK) are Periplasmic-facing. The chain crosses the membrane as a helical span at residues 7 to 30 (ILGGFFGFLFGGFFGAALGIFIGH). The Cytoplasmic portion of the chain corresponds to 31–283 (QFDKAKRMAN…DLIKKEKGIK (253 aa)). Residues 188-197 (QGGGFSGHQS) show a composition bias toward gly residues. Positions 188–210 (QGGGFSGHQSGGSHQQGQWQQAS) are disordered. A compositionally biased stretch (low complexity) spans 198-210 (GGSHQQGQWQQAS). The 67-residue stretch at 217–283 (DAYNLLGISE…DLIKKEKGIK (67 aa)) folds into the J domain.

Homodimer.

The protein localises to the cell inner membrane. In terms of biological role, regulatory DnaK co-chaperone. Direct interaction between DnaK and DjlA is needed for the induction of the wcaABCDE operon, involved in the synthesis of a colanic acid polysaccharide capsule, possibly through activation of the RcsB/RcsC phosphotransfer signaling pathway. The colanic acid capsule may help the bacterium survive conditions outside the host. The sequence is that of Co-chaperone protein DjlA from Aliivibrio fischeri (strain ATCC 700601 / ES114) (Vibrio fischeri).